The chain runs to 111 residues: Small ribosomal subunit protein uS10 (111 aa).

Belongs to the universal ribosomal protein uS10 family. As to quaternary structure, part of the 30S ribosomal subunit.

Its function is as follows. Involved in the binding of tRNA to the ribosomes. The polypeptide is Small ribosomal subunit protein uS10 (Ehrlichia ruminantium (strain Welgevonden)).